The chain runs to 46 residues: Mu-segestritoxin-Sf1b (46 aa).

4 disulfides stabilise this stretch: C3-C19, C10-C22, C18-C42, and C24-C40. A keys region for toxin activity region spans residues 31 to 33 (RPW).

It belongs to the neurotoxin 16 (SFI) family. In terms of tissue distribution, expressed by the venom gland.

The protein localises to the secreted. Its function is as follows. Insecticidal toxin. Causes flaccid paralysis followed by death when injected into Heliothis virescens larvae. Does not induce any toxic effects when injected intravenously into adult mice at a dose of 1.25 mg/kg body weight. In Segestria florentina (Tube-web spider), this protein is Mu-segestritoxin-Sf1b.